Reading from the N-terminus, the 98-residue chain is NADH-ubiquinone oxidoreductase chain 4L (98 aa).

3 consecutive transmembrane segments (helical) span residues 1–21, 29–49, and 61–81; these read MSMV…GLLM, SLLC…LTIL, and IILL…LVMV.

It belongs to the complex I subunit 4L family. Core subunit of respiratory chain NADH dehydrogenase (Complex I) which is composed of 45 different subunits.

It is found in the mitochondrion inner membrane. It catalyses the reaction a ubiquinone + NADH + 5 H(+)(in) = a ubiquinol + NAD(+) + 4 H(+)(out). Core subunit of the mitochondrial membrane respiratory chain NADH dehydrogenase (Complex I) which catalyzes electron transfer from NADH through the respiratory chain, using ubiquinone as an electron acceptor. Part of the enzyme membrane arm which is embedded in the lipid bilayer and involved in proton translocation. In Bos mutus grunniens (Wild yak), this protein is NADH-ubiquinone oxidoreductase chain 4L (MT-ND4L).